We begin with the raw amino-acid sequence, 272 residues long: Probable nitrilase C965.09 (272 aa).

Positions 3–244 (ANIACVQMAP…EGVISYTVDL (242 aa)) constitute a CN hydrolase domain. The active-site Proton acceptor is the Glu-45. Lys-118 serves as the catalytic Proton donor. Cys-150 serves as the catalytic Nucleophile.

Belongs to the carbon-nitrogen hydrolase superfamily.

The protein localises to the cytoplasm. It is found in the nucleus. The polypeptide is Probable nitrilase C965.09 (Schizosaccharomyces pombe (strain 972 / ATCC 24843) (Fission yeast)).